The following is a 208-amino-acid chain: Large ribosomal subunit protein uL4 (208 aa).

The segment at 46 to 97 (QGTHKTKTRAEVRGGGKKPYRQKGTGNARQGSSRSPIMVGGGTIFGPQPRSY) is disordered. The segment covering 69–80 (GTGNARQGSSRS) has biased composition (polar residues).

It belongs to the universal ribosomal protein uL4 family. As to quaternary structure, part of the 50S ribosomal subunit.

Its function is as follows. One of the primary rRNA binding proteins, this protein initially binds near the 5'-end of the 23S rRNA. It is important during the early stages of 50S assembly. It makes multiple contacts with different domains of the 23S rRNA in the assembled 50S subunit and ribosome. Functionally, forms part of the polypeptide exit tunnel. The protein is Large ribosomal subunit protein uL4 of Chlorobaculum parvum (strain DSM 263 / NCIMB 8327) (Chlorobium vibrioforme subsp. thiosulfatophilum).